A 455-amino-acid chain; its full sequence is Keratin, type I cuticular Ha5 (455 aa).

The segment at Met1–Glu97 is head. Residues Glu97–Leu408 enclose the IF rod domain. A coil 1A region spans residues Lys98–Trp132. The interval Cys133–Asp143 is linker 1. The interval Tyr144–Cys244 is coil 1B. The segment at Gln245–Val260 is linker 12. The segment at Asp261–Glu404 is coil 2. The segment at Asp405–Phe455 is tail.

Belongs to the intermediate filament family.

In Mus musculus (Mouse), this protein is Keratin, type I cuticular Ha5.